Reading from the N-terminus, the 507-residue chain is 2,3-bisphosphoglycerate-independent phosphoglycerate mutase (507 aa).

Residues Asp-13 and Ser-63 each contribute to the Mn(2+) site. Ser-63 serves as the catalytic Phosphoserine intermediate. Substrate-binding positions include His-122, 152 to 153 (RD), Arg-184, Arg-190, 256 to 259 (RADR), and Lys-330. Mn(2+)-binding residues include Asp-397, His-401, Asp-438, His-439, and His-457.

The protein belongs to the BPG-independent phosphoglycerate mutase family. As to quaternary structure, monomer. The cofactor is Mn(2+).

It catalyses the reaction (2R)-2-phosphoglycerate = (2R)-3-phosphoglycerate. It participates in carbohydrate degradation; glycolysis; pyruvate from D-glyceraldehyde 3-phosphate: step 3/5. In terms of biological role, catalyzes the interconversion of 2-phosphoglycerate and 3-phosphoglycerate. The polypeptide is 2,3-bisphosphoglycerate-independent phosphoglycerate mutase (Chromobacterium violaceum (strain ATCC 12472 / DSM 30191 / JCM 1249 / CCUG 213 / NBRC 12614 / NCIMB 9131 / NCTC 9757 / MK)).